A 160-amino-acid polypeptide reads, in one-letter code: Nucleotide-binding protein Ping_2261 (160 aa).

The protein belongs to the YajQ family.

Functionally, nucleotide-binding protein. In Psychromonas ingrahamii (strain DSM 17664 / CCUG 51855 / 37), this protein is Nucleotide-binding protein Ping_2261.